The chain runs to 101 residues: Integration host factor subunit beta (101 aa).

Belongs to the bacterial histone-like protein family. In terms of assembly, heterodimer of an alpha and a beta chain.

In terms of biological role, this protein is one of the two subunits of integration host factor, a specific DNA-binding protein that functions in genetic recombination as well as in transcriptional and translational control. This chain is Integration host factor subunit beta, found in Maricaulis maris (strain MCS10) (Caulobacter maris).